A 189-amino-acid polypeptide reads, in one-letter code: dCTP deaminase (189 aa).

DCTP is bound by residues 112–117, 136–138, glutamine 157, tyrosine 171, and glutamine 181; these read KSTYAR and TLE. The Proton donor/acceptor role is filled by glutamate 138.

It belongs to the dCTP deaminase family. In terms of assembly, homotrimer.

The enzyme catalyses dCTP + H2O + H(+) = dUTP + NH4(+). Its pathway is pyrimidine metabolism; dUMP biosynthesis; dUMP from dCTP (dUTP route): step 1/2. Functionally, catalyzes the deamination of dCTP to dUTP. The protein is dCTP deaminase of Paraburkholderia xenovorans (strain LB400).